The sequence spans 463 residues: uncharacterized protein (463 aa).

Residues 12 to 70 (LWQQGSVVELTITGLNHQGEGIGRFNERVVFVPDTAPGDRLEVRLVKVKRNYALAQLLK) enclose the TRAM domain. Cys83, Cys89, Cys92, and Cys171 together coordinate [4Fe-4S] cluster. Positions 295, 324, 345, and 390 each coordinate S-adenosyl-L-methionine. Cys417 acts as the Nucleophile in catalysis.

Belongs to the class I-like SAM-binding methyltransferase superfamily. RNA M5U methyltransferase family.

This is an uncharacterized protein from Synechocystis sp. (strain ATCC 27184 / PCC 6803 / Kazusa).